Consider the following 212-residue polypeptide: Fibroblast growth factor 8b (212 aa).

Residues 1-27 (MRLKSSRLGYLFLQFMTLCFYTQMTMQ) form the signal peptide. An N-linked (GlcNAc...) asparagine glycan is attached at Asn-139.

This sequence belongs to the heparin-binding growth factors family.

Its subcellular location is the secreted. Its function is as follows. May act as signaling molecule during development of the midbrain-hindbrain boundary (MHB) organizer, and be involved in patterning of the nervous system. The chain is Fibroblast growth factor 8b (fgf8b) from Danio rerio (Zebrafish).